A 201-amino-acid polypeptide reads, in one-letter code: Large ribosomal subunit protein uL4 (201 aa).

Residues 43 to 69 form a disordered region; sequence TKAQKTRSEVAGGGKKPWRQKGTGRAR.

Belongs to the universal ribosomal protein uL4 family. As to quaternary structure, part of the 50S ribosomal subunit.

In terms of biological role, one of the primary rRNA binding proteins, this protein initially binds near the 5'-end of the 23S rRNA. It is important during the early stages of 50S assembly. It makes multiple contacts with different domains of the 23S rRNA in the assembled 50S subunit and ribosome. Functionally, forms part of the polypeptide exit tunnel. The sequence is that of Large ribosomal subunit protein uL4 from Idiomarina loihiensis (strain ATCC BAA-735 / DSM 15497 / L2-TR).